The chain runs to 589 residues: Lipoprotein LpqB (589 aa).

The first 20 residues, 1–20 (MMRGVLVIMRLLCLGMLFTG), serve as a signal peptide directing secretion. Cys-21 is lipidated: N-palmitoyl cysteine. Cys-21 carries the S-diacylglycerol cysteine lipid modification.

The protein belongs to the LpqB lipoprotein family.

Its subcellular location is the cell membrane. The chain is Lipoprotein LpqB from Mycobacterium leprae (strain TN).